A 279-amino-acid polypeptide reads, in one-letter code: Large ribosomal subunit protein uL2 (279 aa).

Disordered stretches follow at residues 29 to 53 (PEKS…TTRH) and 224 to 279 (VAMN…KKRK). Basic and acidic residues predominate over residues 253–268 (KEGRTRHPNKESDKLI). The span at 269 to 279 (VRRRNAGKKRK) shows a compositional bias: basic residues.

It belongs to the universal ribosomal protein uL2 family. Part of the 50S ribosomal subunit. Forms a bridge to the 30S subunit in the 70S ribosome.

In terms of biological role, one of the primary rRNA binding proteins. Required for association of the 30S and 50S subunits to form the 70S ribosome, for tRNA binding and peptide bond formation. It has been suggested to have peptidyltransferase activity; this is somewhat controversial. Makes several contacts with the 16S rRNA in the 70S ribosome. This Leifsonia xyli subsp. xyli (strain CTCB07) protein is Large ribosomal subunit protein uL2.